A 447-amino-acid chain; its full sequence is MPGLDDIRRAVSKLLKRSGPYENIVNEFIRDLQRALISADVNVRLVFNLTKRIRERALKEQPPPGLSRREWLVKLTYDELVKLFGGEYEPEVKPPYTPYVIMMVGVQGSGKTTTVGKLAKFYRGMGYRVGVVAADTYRPGAYEQLKQLADRAGAMFYGEPGSKDPVGIARRGVEELKQRGADIVIVDTAGRHGYGEEEALLDEMKRIAEAIKPDEVVLVIDAAMGQKSYDLAKRFHEATPVGSIIVTKMDGTAKGGGALSAVAATGARIKFIGTGEDIDEIEVFRPKRFVARLLGMGDLESLLEKIERLRGVEEFEKTVAEMMSGKITFRTIYKQLQQVTKLGPFRKILQMIPGISTMLESLDEAARLSEEKVKKWLTIMNSMTYEELDNPNLLEERSRVKRIAVGAGVEPSEVRELYNYYKSVKKMMRQLKKRKDLLERFARLGGV.

Residues 105–112 (GVQGSGKT), 187–191 (DTAGR), and 247–250 (TKMD) each bind GTP.

Belongs to the GTP-binding SRP family. SRP54 subfamily. As to quaternary structure, part of the signal recognition particle protein translocation system, which is composed of SRP and FtsY. Archaeal SRP consists of a 7S RNA molecule of 300 nucleotides and two protein subunits: SRP54 and SRP19.

The protein localises to the cytoplasm. The catalysed reaction is GTP + H2O = GDP + phosphate + H(+). Its function is as follows. Involved in targeting and insertion of nascent membrane proteins into the cytoplasmic membrane. Binds to the hydrophobic signal sequence of the ribosome-nascent chain (RNC) as it emerges from the ribosomes. The SRP-RNC complex is then targeted to the cytoplasmic membrane where it interacts with the SRP receptor FtsY. The polypeptide is Signal recognition particle 54 kDa protein (Hyperthermus butylicus (strain DSM 5456 / JCM 9403 / PLM1-5)).